The primary structure comprises 409 residues: Multidrug efflux pump Tap (409 aa).

A run of 12 helical transmembrane segments spans residues 10–30 (LLILFAALTAGAGNGITIVAF), 46–66 (IVAMAGTLPLLVATLIAGAAV), 80–98 (LLSALSVAAVPVLALIFGV), 104–123 (AVLAVLAGLGAFFDPAGMTA), 144–168 (SVYEAVFNLGYIVGPGIGGLMIATL), 174–193 (MWVTAGAFCCSILAISVLRL), 218–240 (FVWYTPVLRTLAIVDLVATGLYM), 260–282 (LGWVLMALSIGGLLGALGYAVMS), 289–308 (ATMLTAVITLGVAMTVIAFL), 313–335 (LILVLCAIVGFVYGPIAPIYNYV), 348–370 (VVGVMGSLAYAAGPLGLILAGPL), and 375–397 (GLHATFLALSLPMLLLGVVAVFL).

This sequence belongs to the major facilitator superfamily. Drug:H(+) antiporter-3 (DHA3) (TC 2.A.1.21) family.

It is found in the cell inner membrane. Its activity is regulated as follows. Efflux activity is inhibited by carbonyl cyanide m-chlorophenylhydrazone (CCCP) and reserpine, but not by o-vanadate or chlorpromazine (CPZ). Its function is as follows. Efflux pump that contributes to intrinsic antibiotic resistance. The pump uses the electrochemical gradient as a source of energy. Confers low-level resistance to tetracycline and to several aminoglycosides, including streptomycin, gentamicin, 2'-N-ethylnetilmicin and 6'-N-ethylnetilmicin. The protein is Multidrug efflux pump Tap of Mycolicibacterium fortuitum (Mycobacterium fortuitum).